An 86-amino-acid chain; its full sequence is Small ribosomal subunit protein eS27 (86 aa).

The C4-type zinc-finger motif lies at 39 to 61; sequence CQGCFNITTVFSHSQTVVVCPGC.

It belongs to the eukaryotic ribosomal protein eS27 family. It depends on Zn(2+) as a cofactor.

This is Small ribosomal subunit protein eS27 (RPS27) from Hordeum vulgare (Barley).